The following is a 248-amino-acid chain: ATP synthase subunit a (248 aa).

6 consecutive transmembrane segments (helical) span residues 25 to 45, 83 to 103, 113 to 133, 142 to 162, 192 to 212, and 215 to 235; these read IAFT…AVMM, FFPL…VGII, LIVT…YGLA, LFVP…IEVI, FIAM…LPLG, and IALT…FAIL.

The protein belongs to the ATPase A chain family. In terms of assembly, F-type ATPases have 2 components, CF(1) - the catalytic core - and CF(0) - the membrane proton channel. CF(1) has five subunits: alpha(3), beta(3), gamma(1), delta(1), epsilon(1). CF(0) has four main subunits: a, b, b' and c.

The protein resides in the cell inner membrane. Functionally, key component of the proton channel; it plays a direct role in the translocation of protons across the membrane. This is ATP synthase subunit a from Rhodopseudomonas palustris (strain HaA2).